Consider the following 312-residue polypeptide: Olfactory receptor OR51C1 (312 aa).

At 1–26 (MGSNITSTSIIFLLTGVPGLEAFHTW) the chain is on the extracellular side. A helical transmembrane segment spans residues 27–47 (ISIPFCFLSVTALLGNSLILF). Residues 48-66 (ATITQPSLHEPMYYFLSML) lie on the Cytoplasmic side of the membrane. A helical transmembrane segment spans residues 67 to 87 (SATDLGLSISTLVTMLSIFWF). At 88-99 (NVREISFNACLS) the chain is on the extracellular side. Cysteine 97 and cysteine 179 are disulfide-bonded. Residues 100–120 (HMFFIKFFTVMESSVLLAMAF) traverse the membrane as a helical segment. The Cytoplasmic segment spans residues 121–143 (DRFVAVSNPLRYAMILTDSRIAQ). A helical membrane pass occupies residues 144–164 (IGVASVIRGLLMLTPMVALLI). Over 165-201 (RLSYCHSQVLHHSYCYHPDVMKLSCTDTRINSAVGLT) the chain is Extracellular. The chain crosses the membrane as a helical span at residues 202-222 (AMFSTVGVDLLLILLSYVLII). Residues 223 to 240 (RTVLSVASPEERKETFST) are Cytoplasmic-facing. A helical membrane pass occupies residues 241-261 (CVSHIVAFAIYYIPLISLSIV). Topologically, residues 262-273 (HRFGKQAPAYVH) are extracellular. Residues 274-294 (TMIANTYLLISPLMNPVIYSV) form a helical membrane-spanning segment. Residues 295–312 (KTKQIRRAVIKILHSKET) are Cytoplasmic-facing.

The protein belongs to the G-protein coupled receptor 1 family.

It localises to the membrane. Its function is as follows. Odorant receptor. This is Olfactory receptor OR51C1 from Homo sapiens (Human).